Here is a 498-residue protein sequence, read N- to C-terminus: ATP synthase subunit beta, chloroplastic (498 aa).

An ATP-binding site is contributed by 172 to 179 (GGAGVGKT).

This sequence belongs to the ATPase alpha/beta chains family. F-type ATPases have 2 components, CF(1) - the catalytic core - and CF(0) - the membrane proton channel. CF(1) has five subunits: alpha(3), beta(3), gamma(1), delta(1), epsilon(1). CF(0) has four main subunits: a(1), b(1), b'(1) and c(9-12).

It is found in the plastid. The protein resides in the chloroplast thylakoid membrane. The enzyme catalyses ATP + H2O + 4 H(+)(in) = ADP + phosphate + 5 H(+)(out). Functionally, produces ATP from ADP in the presence of a proton gradient across the membrane. The catalytic sites are hosted primarily by the beta subunits. This is ATP synthase subunit beta, chloroplastic from Lactuca sativa (Garden lettuce).